The primary structure comprises 261 residues: tRNA threonylcarbamoyladenosine dehydratase (261 aa).

Residues 230 to 250 form a helical membrane-spanning segment; sequence CANGFGAATMITATFGFFAVS.

It belongs to the HesA/MoeB/ThiF family.

The protein localises to the membrane. Functionally, catalyzes the ATP-dependent dehydration of threonylcarbamoyladenosine at position 37 (t(6)A37) to form cyclic t(6)A37 (ct(6)A37) in tRNAs that read codons beginning with adenine. This chain is tRNA threonylcarbamoyladenosine dehydratase (tcdA), found in Haemophilus influenzae (strain ATCC 51907 / DSM 11121 / KW20 / Rd).